A 354-amino-acid polypeptide reads, in one-letter code: Hyaluronan and proteoglycan link protein 1 (354 aa).

Residues 1–9 constitute a propeptide that is removed on maturation; the sequence is MKSLLLLVL. 2 N-linked (GlcNAc...) asparagine glycosylation sites follow: Asn21 and Asn56. The 115-residue stretch at 38–152 folds into the Ig-like V-type domain; the sequence is PRLLVEAEQA…EGLEDDTAVV (115 aa). Disulfide bonds link Cys61-Cys139, Cys181-Cys252, Cys205-Cys226, Cys279-Cys349, and Cys304-Cys325. 2 Link domains span residues 159–254 and 259–351; these read VVFP…FCFT and GRFY…YCFR.

The protein belongs to the HAPLN family.

The protein localises to the secreted. It localises to the extracellular space. Its subcellular location is the extracellular matrix. Its function is as follows. Stabilizes the aggregates of proteoglycan monomers with hyaluronic acid in the extracellular cartilage matrix. The polypeptide is Hyaluronan and proteoglycan link protein 1 (HAPLN1) (Sus scrofa (Pig)).